A 214-amino-acid chain; its full sequence is Riboflavin kinase (214 aa).

A disordered region spans residues 1–27; sequence MRPDRPRDPVTGPDEGPESPYPIRMSG. Mg(2+)-binding residues include Thr44 and Asn46. Glu101 acts as the Nucleophile in catalysis.

The protein belongs to the flavokinase family. Zn(2+) serves as cofactor. Requires Mg(2+) as cofactor.

The catalysed reaction is riboflavin + ATP = FMN + ADP + H(+). It participates in cofactor biosynthesis; FMN biosynthesis; FMN from riboflavin (ATP route): step 1/1. Catalyzes the phosphorylation of riboflavin (vitamin B2) to form flavin mononucleotide (FMN) coenzyme. The chain is Riboflavin kinase (fmn1) from Aspergillus niger (strain ATCC MYA-4892 / CBS 513.88 / FGSC A1513).